The sequence spans 99 residues: Plastocyanin (99 aa).

The 99-residue stretch at Ala-1–Asn-99 folds into the Plastocyanin-like domain. The Cu cation site is built by His-37, Cys-84, His-87, and Met-92.

This sequence belongs to the plastocyanin family. Cu(2+) is required as a cofactor.

It localises to the plastid. It is found in the chloroplast thylakoid membrane. In terms of biological role, participates in electron transfer between P700 and the cytochrome b6-f complex in photosystem I. This chain is Plastocyanin (PETE), found in Lactuca sativa (Garden lettuce).